The chain runs to 438 residues: Transmembrane protein 184C (438 aa).

7 helical membrane passes run Leu17–Leu37, Ala48–Leu68, Ile86–Ile106, Tyr179–Tyr199, Tyr212–Tyr232, Val254–Ile274, and Ala287–Ala307. A disordered region spans residues Arg355–Ser438. Low complexity-rich tracts occupy residues Ser374–Met390 and Thr404–Thr413. Ser422 is subject to Phosphoserine. A compositionally biased stretch (basic and acidic residues) spans Ile425–Ser438.

Belongs to the TMEM184 family. As to expression, widely expressed with higher expression in lung, kidney, spleen, pancreas, thymus, prostate, testis, ovary, small intestine and thyroid.

It localises to the membrane. Possible tumor suppressor which may play a role in cell growth. This chain is Transmembrane protein 184C (TMEM184C), found in Homo sapiens (Human).